Here is a 573-residue protein sequence, read N- to C-terminus: Anti-Muellerian hormone type-2 receptor (573 aa).

The N-terminal stretch at 1–17 (MLGSLGLWALLPTAVEA) is a signal peptide. Topologically, residues 18-149 (PPNRRTCVFF…APGESIWMAL (132 aa)) are extracellular. Disulfide bonds link Cys55–Cys79 and Cys92–Cys109. A glycan (N-linked (GlcNAc...) asparagine) is linked at Asn66. Residue Asn119 is glycosylated (N-linked (GlcNAc...) asparagine). Residues 150 to 170 (VLLGLFLLLLLLLGSIILALL) traverse the membrane as a helical segment. Residues 171–573 (QRKNYRVRGE…PQPACTLSPV (403 aa)) are Cytoplasmic-facing. A Protein kinase domain is found at 203–518 (LCFSQVIREG…AHPQESHPFP (316 aa)). Residues 209–217 (IREGGHAVV) and Lys230 contribute to the ATP site. The active-site Proton acceptor is Asp333.

This sequence belongs to the protein kinase superfamily. TKL Ser/Thr protein kinase family. TGFB receptor subfamily. Interacts with type I receptor ACVR1. The cofactor is Mg(2+). It depends on Mn(2+) as a cofactor.

Its subcellular location is the membrane. The catalysed reaction is L-threonyl-[receptor-protein] + ATP = O-phospho-L-threonyl-[receptor-protein] + ADP + H(+). It carries out the reaction L-seryl-[receptor-protein] + ATP = O-phospho-L-seryl-[receptor-protein] + ADP + H(+). On ligand binding, forms a receptor complex consisting of two type II and two type I transmembrane serine/threonine kinases. Type II receptors phosphorylate and activate type I receptors which autophosphorylate, then bind and activate SMAD transcriptional regulators. Receptor for anti-Muellerian hormone. The sequence is that of Anti-Muellerian hormone type-2 receptor (AMHR2) from Homo sapiens (Human).